The following is a 139-amino-acid chain: Putative nickel-responsive regulator (139 aa).

Positions 79, 90, 92, and 98 each coordinate Ni(2+).

The protein belongs to the transcriptional regulatory CopG/NikR family. Ni(2+) serves as cofactor.

Transcriptional regulator. The protein is Putative nickel-responsive regulator of Anaeromyxobacter sp. (strain K).